The sequence spans 151 residues: MNPLRRKRLLIILAILVGVGIAVGLALSALQQNINLFYTPTQIANGEAPIDTRIRAGGMVEKGSLKRSGDSLDVTFVVTDFNKAVTITYRGILPDLFREGQGIVALGKLNADGVVVADEVLAKHDEKYMPPEVTKALKDSGQSAPTPAKEG.

Topologically, residues 1–8 (MNPLRRKR) are cytoplasmic. A helical; Signal-anchor for type II membrane protein transmembrane segment spans residues 9–29 (LLIILAILVGVGIAVGLALSA). The Periplasmic portion of the chain corresponds to 30-151 (LQQNINLFYT…QSAPTPAKEG (122 aa)). Positions 124 and 128 each coordinate heme.

The protein belongs to the CcmE/CycJ family.

It is found in the cell inner membrane. Functionally, heme chaperone required for the biogenesis of c-type cytochromes. Transiently binds heme delivered by CcmC and transfers the heme to apo-cytochromes in a process facilitated by CcmF and CcmH. The sequence is that of Cytochrome c-type biogenesis protein CcmE from Pseudomonas fluorescens (strain SBW25).